Here is a 212-residue protein sequence, read N- to C-terminus: Large ribosomal subunit protein uL3 (212 aa).

The disordered stretch occupies residues 135-161 (MTHGNSLSHRAPGSIGQNQSPGKVFKG). Gln153 bears the N5-methylglutamine mark.

Belongs to the universal ribosomal protein uL3 family. Part of the 50S ribosomal subunit. Forms a cluster with proteins L14 and L19. Methylated by PrmB.

Functionally, one of the primary rRNA binding proteins, it binds directly near the 3'-end of the 23S rRNA, where it nucleates assembly of the 50S subunit. The polypeptide is Large ribosomal subunit protein uL3 (Alteromonas mediterranea (strain DSM 17117 / CIP 110805 / LMG 28347 / Deep ecotype)).